A 312-amino-acid polypeptide reads, in one-letter code: MIEFEKPNITVVDQEEAYGKFVVEPLERGFGTTLGNSLRRVLLTSIPGTALSYIQIDGVLHEFSTVPGVREDVTKIILNLKKLELKSLSDEEKIAEIDVTGPAIVTAADLKVDSDIEVLNPDQYICSIADGGHLHMNVAIKNGRGYVPASENKTDDMPIGVIPVDSLFSPIKKVNYQVESARVGKRDDYDKLTLEIWTDGSITPNDALSFAAKILVEHFKVFMSTDMDAQFDDVMVEKEDDKNEKKLEMTIEELDLSVRSYNCLKRAGINTVQELTDKSEADMMRVRNLGRKSLEEVKNKLAELGLSLRQDD.

The tract at residues 1–226 is alpha N-terminal domain (alpha-NTD); the sequence is MIEFEKPNIT…EHFKVFMSTD (226 aa). The segment at 243-312 is alpha C-terminal domain (alpha-CTD); sequence NEKKLEMTIE…ELGLSLRQDD (70 aa).

This sequence belongs to the RNA polymerase alpha chain family. As to quaternary structure, homodimer. The RNAP catalytic core consists of 2 alpha, 1 beta, 1 beta' and 1 omega subunit. When a sigma factor is associated with the core the holoenzyme is formed, which can initiate transcription.

It catalyses the reaction RNA(n) + a ribonucleoside 5'-triphosphate = RNA(n+1) + diphosphate. Functionally, DNA-dependent RNA polymerase catalyzes the transcription of DNA into RNA using the four ribonucleoside triphosphates as substrates. The protein is DNA-directed RNA polymerase subunit alpha of Lactobacillus gasseri (strain ATCC 33323 / DSM 20243 / BCRC 14619 / CIP 102991 / JCM 1131 / KCTC 3163 / NCIMB 11718 / NCTC 13722 / AM63).